A 421-amino-acid chain; its full sequence is Phosphoribosylamine--glycine ligase (421 aa).

The ATP-grasp domain occupies 108-314 (KEIMVKYNVP…FAQNIDDIMM (207 aa)). 134–195 (IEEQGAPIVV…EEFLDGEEFS (62 aa)) is an ATP binding site. The Mg(2+) site is built by Glu-284 and Asn-286.

This sequence belongs to the GARS family. It depends on Mg(2+) as a cofactor. The cofactor is Mn(2+).

It carries out the reaction 5-phospho-beta-D-ribosylamine + glycine + ATP = N(1)-(5-phospho-beta-D-ribosyl)glycinamide + ADP + phosphate + H(+). It functions in the pathway purine metabolism; IMP biosynthesis via de novo pathway; N(1)-(5-phospho-D-ribosyl)glycinamide from 5-phospho-alpha-D-ribose 1-diphosphate: step 2/2. This chain is Phosphoribosylamine--glycine ligase, found in Streptococcus pyogenes serotype M6 (strain ATCC BAA-946 / MGAS10394).